The following is a 57-amino-acid chain: UPF0391 membrane protein HNE_2348 (57 aa).

Helical transmembrane passes span 4 to 24 and 27 to 47; these read WALT…GGIA and AASI…ITFV.

It belongs to the UPF0391 family.

It localises to the cell membrane. The polypeptide is UPF0391 membrane protein HNE_2348 (Hyphomonas neptunium (strain ATCC 15444)).